Here is a 447-residue protein sequence, read N- to C-terminus: Large ribosomal subunit protein bL27m (447 aa).

Composition is skewed to basic and acidic residues over residues 377–402 (QREA…KAEK) and 409–447 (KVEK…EKKD). Residues 377 to 447 (QREAKKAREG…KKDSKTEKKD (71 aa)) form a disordered region.

Belongs to the bacterial ribosomal protein bL27 family. In terms of assembly, component of the mitochondrial large ribosomal subunit (mt-LSU). Mature N.crassa 74S mitochondrial ribosomes consist of a small (37S) and a large (54S) subunit. The 37S small subunit contains a 16S ribosomal RNA (16S mt-rRNA) and 32 different proteins. The 54S large subunit contains a 23S rRNA (23S mt-rRNA) and 42 different proteins.

It localises to the mitochondrion. Functionally, component of the mitochondrial ribosome (mitoribosome), a dedicated translation machinery responsible for the synthesis of mitochondrial genome-encoded proteins, including at least some of the essential transmembrane subunits of the mitochondrial respiratory chain. The mitoribosomes are attached to the mitochondrial inner membrane and translation products are cotranslationally integrated into the membrane. This is Large ribosomal subunit protein bL27m (mrp7) from Neurospora crassa (strain ATCC 24698 / 74-OR23-1A / CBS 708.71 / DSM 1257 / FGSC 987).